The chain runs to 263 residues: 3-methyl-2-oxobutanoate hydroxymethyltransferase (263 aa).

D45 and D84 together coordinate Mg(2+). Residues 45 to 46 (DS), D84, and K112 contribute to the 3-methyl-2-oxobutanoate site. Residue E114 participates in Mg(2+) binding. E181 acts as the Proton acceptor in catalysis.

It belongs to the PanB family. Homodecamer; pentamer of dimers. It depends on Mg(2+) as a cofactor.

It is found in the cytoplasm. The catalysed reaction is 3-methyl-2-oxobutanoate + (6R)-5,10-methylene-5,6,7,8-tetrahydrofolate + H2O = 2-dehydropantoate + (6S)-5,6,7,8-tetrahydrofolate. It participates in cofactor biosynthesis; (R)-pantothenate biosynthesis; (R)-pantoate from 3-methyl-2-oxobutanoate: step 1/2. In terms of biological role, catalyzes the reversible reaction in which hydroxymethyl group from 5,10-methylenetetrahydrofolate is transferred onto alpha-ketoisovalerate to form ketopantoate. The polypeptide is 3-methyl-2-oxobutanoate hydroxymethyltransferase (Photorhabdus laumondii subsp. laumondii (strain DSM 15139 / CIP 105565 / TT01) (Photorhabdus luminescens subsp. laumondii)).